The primary structure comprises 707 residues: Leucine-rich repeat neuronal protein 3 (707 aa).

The first 22 residues, 1–22 (MKDTPLQVHVLLGLAITTLVQA), serve as a signal peptide directing secretion. One can recognise an LRRNT domain in the interval 23 to 69 (IDKKVDCPQLCTCEIRPWFTPRSIYMEASTVDCNDLGLLNFPARLPA). Residues 23–626 (IDKKVDCPQL…DGKEYGKNHT (604 aa)) lie on the Extracellular side of the membrane. 12 LRR repeats span residues 70–91 (DTQI…TDFP), 93–114 (NLTG…NVQK), 117–138 (QLLS…CLYG), 141–162 (NLQE…AFIG), 165–186 (NLLR…WFDA), 189–210 (NLEI…NFQP), 213–234 (KLRS…ALAG), 237–258 (NLES…ALQK), 261–282 (NLKF…DFSN), 285–304 (HLKE…DSLA), 310–332 (DLRK…AFFR), and 335–358 (KLES…ESLP). 2 N-linked (GlcNAc...) asparagine glycosylation sites follow: N93 and N103. An N-linked (GlcNAc...) asparagine glycan is attached at N223. The LRRCT domain maps to 368–421 (NPIRCDCVIRWINMNKTNIRFMEPDSLFCVDPPEFQGQNVRQVHFRDMMEICLP). An N-linked (GlcNAc...) asparagine glycan is attached at N382. An Ig-like C2-type domain is found at 421 to 514 (PLIAPESFPS…DLKSIMIKVG (94 aa)). A disulfide bridge links C444 with C496. N-linked (GlcNAc...) asparagine glycans are attached at residues N522, N579, N608, and N624. In terms of domain architecture, Fibronectin type-III spans 523 to 614 (GSLNIKIRDI…QCVNVTTKSL (92 aa)). A helical membrane pass occupies residues 627–647 (VFVACVGGLLGIIGVMCLFSC). Topologically, residues 648–707 (VSQEGSSEGEHSYAVNHCHKPALAFSELYPPLINLWESSKEKRATLEVKATAIGVPTNMS) are cytoplasmic.

In terms of tissue distribution, expressed in the brain, in Stronger expression in the ventricular zone and anlage of thalamus, spinal cord, and dorsal root ganglion in 11-17 dpc cerebellum and cerebral cortex in adults.

It is found in the membrane. In Mus musculus (Mouse), this protein is Leucine-rich repeat neuronal protein 3 (Lrrn3).